A 310-amino-acid chain; its full sequence is MPDSSINSDSGFKHLSVMADAVSQPVAALPAELLDGGLMIDATLGGGGHSALLLERHPDLRLIGLDQDPTARAAAAERLALFGDRVKIVATNFVDFSPAEPAVVVMADLGVSSPQLDVAKRGFSFRLDGPLDMRMNPQVGETAAELIGRLEETELADLIYAYGEERLSRRIARRIKHDLAEQGPYAGTAALAYAVAGCYPPKARRGRIHPATRTFQALRIAVNDELDALDRFLQKAPDWLVPGGLLAVISFHSLEDRRVKTAFLRDQRLERLTRKPLVASEMEIAANPRSRSAKCRFARRLPQAMTADAL.

S-adenosyl-L-methionine-binding positions include 47–49 (GGH), Asp66, Phe93, Asp108, and Gln115.

It belongs to the methyltransferase superfamily. RsmH family.

It localises to the cytoplasm. It catalyses the reaction cytidine(1402) in 16S rRNA + S-adenosyl-L-methionine = N(4)-methylcytidine(1402) in 16S rRNA + S-adenosyl-L-homocysteine + H(+). Functionally, specifically methylates the N4 position of cytidine in position 1402 (C1402) of 16S rRNA. The chain is Ribosomal RNA small subunit methyltransferase H from Prochlorococcus marinus (strain MIT 9303).